Here is a 140-residue protein sequence, read N- to C-terminus: uncharacterized protein (140 aa).

This is an uncharacterized protein from Caenorhabditis elegans.